Here is a 228-residue protein sequence, read N- to C-terminus: Probable septum site-determining protein MinC (228 aa).

Belongs to the MinC family. Interacts with MinD and FtsZ.

Cell division inhibitor that blocks the formation of polar Z ring septums. Rapidly oscillates between the poles of the cell to destabilize FtsZ filaments that have formed before they mature into polar Z rings. Prevents FtsZ polymerization. This is Probable septum site-determining protein MinC from Bacillus mycoides (strain KBAB4) (Bacillus weihenstephanensis).